We begin with the raw amino-acid sequence, 565 residues long: Periplasmic trehalase (565 aa).

Residues 1 to 30 (MKSPAPSRPQKMALIPACIFLCFAALSVQA) form the signal peptide. Residues Arg152, 159-160 (WD), Asn196, 205-207 (RSQ), 277-279 (RPE), and Gly310 contribute to the substrate site. Residues Asp312 and Glu496 each act as proton donor/acceptor in the active site. Glu511 lines the substrate pocket. Positions 539–565 (CDNVPATRPLSESTTQPLKQKEAEPTP) are disordered.

It belongs to the glycosyl hydrolase 37 family. Monomer.

It is found in the periplasm. The enzyme catalyses alpha,alpha-trehalose + H2O = alpha-D-glucose + beta-D-glucose. Functionally, provides the cells with the ability to utilize trehalose at high osmolarity by splitting it into glucose molecules that can subsequently be taken up by the phosphotransferase-mediated uptake system. This is Periplasmic trehalase from Escherichia coli O45:K1 (strain S88 / ExPEC).